We begin with the raw amino-acid sequence, 619 residues long: Guanylate cyclase soluble subunit beta-1 (619 aa).

H105 is a heme binding site. The Guanylate cyclase domain maps to 421–554; sequence TILFSGIVGF…NTVNLTSRTE (134 aa).

This sequence belongs to the adenylyl cyclase class-4/guanylyl cyclase family. The active enzyme is formed by a heterodimer of an alpha and a beta subunit. Homotetramer; dimer of dimers (in vitro). Heterodimer with GUCY1A1. Can also form inactive homodimers in vitro. The cofactor is heme. In terms of tissue distribution, lung and brain.

Its subcellular location is the cytoplasm. It carries out the reaction GTP = 3',5'-cyclic GMP + diphosphate. Its activity is regulated as follows. Activated by nitric oxide in the presence of magnesium or manganese ions. In terms of biological role, mediates responses to nitric oxide (NO) by catalyzing the biosynthesis of the signaling molecule cGMP. This is Guanylate cyclase soluble subunit beta-1 (Gucy1b1) from Rattus norvegicus (Rat).